Consider the following 366-residue polypeptide: Carbamoyl phosphate synthase small chain (366 aa).

Residues 1–168 (MYGILVLEDG…KETVVYSADD (168 aa)) form a CPSase region. 3 residues coordinate L-glutamine: serine 45, glycine 220, and glycine 222. The Glutamine amidotransferase type-1 domain maps to 172–363 (KCVLIDCGVK…VELGIKFKAE (192 aa)). Cysteine 247 serves as the catalytic Nucleophile. Residues leucine 248, glutamine 251, asparagine 289, glycine 291, and phenylalanine 292 each coordinate L-glutamine. Catalysis depends on residues histidine 336 and glutamate 338.

Belongs to the CarA family. Composed of two chains; the small (or glutamine) chain promotes the hydrolysis of glutamine to ammonia, which is used by the large (or ammonia) chain to synthesize carbamoyl phosphate. Tetramer of heterodimers (alpha,beta)4.

The enzyme catalyses hydrogencarbonate + L-glutamine + 2 ATP + H2O = carbamoyl phosphate + L-glutamate + 2 ADP + phosphate + 2 H(+). It catalyses the reaction L-glutamine + H2O = L-glutamate + NH4(+). The protein operates within amino-acid biosynthesis; L-arginine biosynthesis; carbamoyl phosphate from bicarbonate: step 1/1. It functions in the pathway pyrimidine metabolism; UMP biosynthesis via de novo pathway; (S)-dihydroorotate from bicarbonate: step 1/3. Small subunit of the glutamine-dependent carbamoyl phosphate synthetase (CPSase). CPSase catalyzes the formation of carbamoyl phosphate from the ammonia moiety of glutamine, carbonate, and phosphate donated by ATP, constituting the first step of 2 biosynthetic pathways, one leading to arginine and/or urea and the other to pyrimidine nucleotides. The small subunit (glutamine amidotransferase) binds and cleaves glutamine to supply the large subunit with the substrate ammonia. This Methanococcus maripaludis (strain C6 / ATCC BAA-1332) protein is Carbamoyl phosphate synthase small chain.